Here is a 433-residue protein sequence, read N- to C-terminus: Adenylosuccinate synthetase (433 aa).

GTP-binding positions include glycine 18 to lysine 24 and glycine 46 to threonine 48. Aspartate 19 (proton acceptor) is an active-site residue. Residues aspartate 19 and glycine 46 each contribute to the Mg(2+) site. IMP-binding positions include aspartate 19–lysine 22, asparagine 44–histidine 47, threonine 136, arginine 150, glutamine 229, threonine 244, and arginine 308. Histidine 47 (proton donor) is an active-site residue. Valine 304–arginine 310 is a binding site for substrate. GTP-binding positions include arginine 310, lysine 336 to aspartate 338, and glycine 420 to glycine 422.

Belongs to the adenylosuccinate synthetase family. As to quaternary structure, homodimer. Mg(2+) is required as a cofactor.

It is found in the cytoplasm. The enzyme catalyses IMP + L-aspartate + GTP = N(6)-(1,2-dicarboxyethyl)-AMP + GDP + phosphate + 2 H(+). It participates in purine metabolism; AMP biosynthesis via de novo pathway; AMP from IMP: step 1/2. In terms of biological role, plays an important role in the de novo pathway and in the salvage pathway of purine nucleotide biosynthesis. Catalyzes the first committed step in the biosynthesis of AMP from IMP. The sequence is that of Adenylosuccinate synthetase from Schistosoma japonicum (Blood fluke).